The sequence spans 412 residues: Probable tRNA sulfurtransferase (412 aa).

In terms of domain architecture, THUMP spans 58 to 163 (DEVIKQLGYV…SEGTYIYVGK (106 aa)). Residues 181–182 (ML), 206–207 (HF), Arg-265, Gly-287, and Gln-296 each bind ATP.

The protein belongs to the ThiI family.

The protein resides in the cytoplasm. It carries out the reaction [ThiI sulfur-carrier protein]-S-sulfanyl-L-cysteine + a uridine in tRNA + 2 reduced [2Fe-2S]-[ferredoxin] + ATP + H(+) = [ThiI sulfur-carrier protein]-L-cysteine + a 4-thiouridine in tRNA + 2 oxidized [2Fe-2S]-[ferredoxin] + AMP + diphosphate. It catalyses the reaction [ThiS sulfur-carrier protein]-C-terminal Gly-Gly-AMP + S-sulfanyl-L-cysteinyl-[cysteine desulfurase] + AH2 = [ThiS sulfur-carrier protein]-C-terminal-Gly-aminoethanethioate + L-cysteinyl-[cysteine desulfurase] + A + AMP + 2 H(+). The protein operates within cofactor biosynthesis; thiamine diphosphate biosynthesis. Catalyzes the ATP-dependent transfer of a sulfur to tRNA to produce 4-thiouridine in position 8 of tRNAs, which functions as a near-UV photosensor. Also catalyzes the transfer of sulfur to the sulfur carrier protein ThiS, forming ThiS-thiocarboxylate. This is a step in the synthesis of thiazole, in the thiamine biosynthesis pathway. The sulfur is donated as persulfide by IscS. The protein is Probable tRNA sulfurtransferase of Acholeplasma laidlawii (strain PG-8A).